The chain runs to 59 residues: Large ribosomal subunit protein uL30 (59 aa).

The protein belongs to the universal ribosomal protein uL30 family. In terms of assembly, part of the 50S ribosomal subunit.

The protein is Large ribosomal subunit protein uL30 of Alkaliphilus oremlandii (strain OhILAs) (Clostridium oremlandii (strain OhILAs)).